A 266-amino-acid polypeptide reads, in one-letter code: Putative carbamate hydrolase RutD (266 aa).

The region spanning 14–115 is the AB hydrolase-1 domain; the sequence is PVVVLISGLG…TVLISVNGWL (102 aa).

It belongs to the AB hydrolase superfamily. Hydrolase RutD family.

It catalyses the reaction carbamate + 2 H(+) = NH4(+) + CO2. Functionally, involved in pyrimidine catabolism. May facilitate the hydrolysis of carbamate, a reaction that can also occur spontaneously. This Shigella sonnei (strain Ss046) protein is Putative carbamate hydrolase RutD.